Consider the following 118-residue polypeptide: Developmental pluripotency-associated protein 5A (118 aa).

Positions 24 to 86 (PEVFQVQSLV…NNKIRAKWML (63 aa)) constitute a KH; atypical domain.

Belongs to the KHDC1 family.

It localises to the cytoplasm. Involved in the maintenance of embryonic stem (ES) cell pluripotency. Dispensable for self-renewal of pluripotent ES cells and establishment of germ cells. Associates with specific target mRNAs. The protein is Developmental pluripotency-associated protein 5A (Dppa5a) of Mus musculus (Mouse).